A 484-amino-acid polypeptide reads, in one-letter code: RNA polymerase sigma-54 factor 1 (484 aa).

The H-T-H motif DNA-binding region spans 355-374 (NLKAVAEAIQMHESTVSRVT). Positions 444–452 (ARRTVAKYR) match the RPON box motif. The disordered stretch occupies residues 464 to 484 (RRDNMWSTMNSRASGGTGLDK). Residues 468–477 (MWSTMNSRAS) are compositionally biased toward polar residues.

Belongs to the sigma-54 factor family.

Functionally, sigma factors are initiation factors that promote the attachment of RNA polymerase to specific initiation sites and are then released. This sigma factor is responsible for the expression of the nitrogen fixation genes. In Bradyrhizobium diazoefficiens (strain JCM 10833 / BCRC 13528 / IAM 13628 / NBRC 14792 / USDA 110), this protein is RNA polymerase sigma-54 factor 1 (rpoN1).